The primary structure comprises 341 residues: 4-hydroxythreonine-4-phosphate dehydrogenase (341 aa).

Thr-126 is a substrate binding site. Residues His-161, His-206, and His-272 each coordinate a divalent metal cation. Substrate is bound by residues Lys-280, Asn-289, and Arg-298.

Belongs to the PdxA family. In terms of assembly, homodimer. A divalent metal cation serves as cofactor.

It is found in the cytoplasm. It carries out the reaction 4-(phosphooxy)-L-threonine + NAD(+) = 3-amino-2-oxopropyl phosphate + CO2 + NADH. The protein operates within cofactor biosynthesis; pyridoxine 5'-phosphate biosynthesis; pyridoxine 5'-phosphate from D-erythrose 4-phosphate: step 4/5. In terms of biological role, catalyzes the NAD(P)-dependent oxidation of 4-(phosphooxy)-L-threonine (HTP) into 2-amino-3-oxo-4-(phosphooxy)butyric acid which spontaneously decarboxylates to form 3-amino-2-oxopropyl phosphate (AHAP). This chain is 4-hydroxythreonine-4-phosphate dehydrogenase, found in Thermosynechococcus vestitus (strain NIES-2133 / IAM M-273 / BP-1).